The chain runs to 584 residues: ETHYLENE INSENSITIVE 3-like 1 protein (584 aa).

Residues tyrosine 41–glutamate 74 adopt a coiled-coil conformation. Residues glutamate 67 to lysine 80 are compositionally biased toward basic and acidic residues. 2 disordered regions span residues glutamate 67 to methionine 93 and glutamate 565 to phenylalanine 584.

It belongs to the EIN3 family. In terms of assembly, acts as a homodimer to bind the primary ethylene response element.

Its subcellular location is the nucleus. Functionally, probable transcription factor acting as a positive regulator in the ethylene response pathway. Could bind the primary ethylene response element present in the ETHYLENE-RESPONSE-FACTOR1 promoter. The protein is ETHYLENE INSENSITIVE 3-like 1 protein (EIL1) of Arabidopsis thaliana (Mouse-ear cress).